The following is a 237-amino-acid chain: 4-hydroxy-tetrahydrodipicolinate reductase (237 aa).

Residues glycine 11 to methionine 16, glycine 92 to threonine 94, and glycine 116 to phenylalanine 119 each bind NAD(+). The Proton donor/acceptor role is filled by histidine 148. (S)-2,3,4,5-tetrahydrodipicolinate is bound at residue histidine 149. Residue lysine 152 is the Proton donor of the active site. Position 158-159 (glycine 158–serine 159) interacts with (S)-2,3,4,5-tetrahydrodipicolinate.

This sequence belongs to the DapB family.

It is found in the cytoplasm. It catalyses the reaction (S)-2,3,4,5-tetrahydrodipicolinate + NAD(+) + H2O = (2S,4S)-4-hydroxy-2,3,4,5-tetrahydrodipicolinate + NADH + H(+). It carries out the reaction (S)-2,3,4,5-tetrahydrodipicolinate + NADP(+) + H2O = (2S,4S)-4-hydroxy-2,3,4,5-tetrahydrodipicolinate + NADPH + H(+). Its pathway is amino-acid biosynthesis; L-lysine biosynthesis via DAP pathway; (S)-tetrahydrodipicolinate from L-aspartate: step 4/4. Catalyzes the conversion of 4-hydroxy-tetrahydrodipicolinate (HTPA) to tetrahydrodipicolinate. The protein is 4-hydroxy-tetrahydrodipicolinate reductase of Xylella fastidiosa (strain M12).